A 1117-amino-acid polypeptide reads, in one-letter code: Reverse gyrase (1117 aa).

The segment at 3 to 42 (LATGAKYYHSCINCGGINTDTRNEKGLPCEVCLPFEDGDV) adopts an RG N-terminal-type zinc-finger fold. Residues cysteine 13, cysteine 16, cysteine 31, and cysteine 34 each coordinate Zn(2+). Residues glutamine 84 and 101-108 (APTGVGKT) each bind ATP. The region spanning 88–284 (AKRLLLSKSF…LFRELLGFEI (197 aa)) is the Helicase ATP-binding domain. The DEAD box signature appears at 206–209 (DDVD). The topoisomerase I stretch occupies residues 551–1117 (KDMKSRMIIV…EELNEILIKN (567 aa)). The 158-residue stretch at 555 to 712 (SRMIIVESPT…NVQRIEMHEI (158 aa)) folds into the Toprim domain. A Mg(2+)-binding site is contributed by glutamate 561. The segment at 631–658 (IKRCSSCGAQFTDELPRCPYCNSDKIDD) adopts an RG C-terminal-type zinc-finger fold. The Zn(2+) site is built by cysteine 634, cysteine 637, cysteine 648, and cysteine 651. Aspartate 681 contacts Mg(2+). A Topo IA-type catalytic domain is found at 728 to 1114 (DVNLVKSQIV…NLYEELNEIL (387 aa)). Tyrosine 864 serves as the catalytic O-(5'-phospho-DNA)-tyrosine intermediate.

The protein in the N-terminal section; belongs to the DEAD box helicase family. DDVD subfamily. This sequence in the C-terminal section; belongs to the type IA topoisomerase family. As to quaternary structure, monomer. It depends on Zn(2+) as a cofactor. The cofactor is Mg(2+).

Its subcellular location is the cytoplasm. It carries out the reaction ATP + H2O = ADP + phosphate + H(+). In terms of biological role, modifies the topological state of DNA by introducing positive supercoils in an ATP-dependent process, increasing the linking number in steps of +1; also positively supercoils with dATP and ATP-gamma-S. With UTP or dTTP relaxes negatively supercoiled DNA, in the absence of any nucleotide partially relaxes negative supercoils. In the absence of nucleotide has a higher affinity for dsDNA with a single-stranded tail than dsDNA or ssDNA. Has an ATPase activity in the absence of DNA. Binds to single-stranded DNA, transiently cleaves and then rejoins the ends, introducing a positive supercoil in the process. The scissile phosphodiester is attacked by the catalytic tyrosine of the enzyme, resulting in the formation of a DNA-(5'-phosphotyrosyl)-enzyme intermediate. Probably involved in rewinding DNA strands in regions of the chromosome that have opened up to allow replication, transcription, DNA repair and/or for DNA protection. The protein is Reverse gyrase of Caldanaerobacter subterraneus subsp. tengcongensis (strain DSM 15242 / JCM 11007 / NBRC 100824 / MB4) (Thermoanaerobacter tengcongensis).